Reading from the N-terminus, the 788-residue chain is Pyridoxal-dependent decarboxylase domain-containing protein 1 (788 aa).

Basic and acidic residues predominate over residues 28–40 (EDSQRRTEEENGK). Residues 28–51 (EDSQRRTEEENGKKLISGDIPGPL) are disordered. Threonine 414 bears the Phosphothreonine mark. A Phosphoserine modification is found at serine 652. The tract at residues 684 to 788 (AGVTLPPTPS…SQVEGPESLR (105 aa)) is disordered. A phosphothreonine mark is found at threonine 687 and threonine 691. A phosphoserine mark is found at serine 710, serine 718, and serine 722. The span at 725 to 734 (HIEDLEKVER) shows a compositional bias: basic and acidic residues. The span at 738-750 (GPEQITLEASSTE) shows a compositional bias: polar residues. Residues serine 748, serine 757, serine 779, and serine 786 each carry the phosphoserine modification. Residues 772–788 (PHPEDDHSQVEGPESLR) are compositionally biased toward basic and acidic residues.

The protein belongs to the group II decarboxylase family. It depends on pyridoxal 5'-phosphate as a cofactor.

This is Pyridoxal-dependent decarboxylase domain-containing protein 1 (PDXDC1) from Homo sapiens (Human).